Reading from the N-terminus, the 651-residue chain is Coiled-coil domain-containing protein 81 (651 aa).

Positions 194–314 (LSSRESFGKR…PKTSPAPACQ (121 aa)) are disordered. S206 is modified (phosphoserine). 2 stretches are compositionally biased toward basic and acidic residues: residues 212–222 (RIEHKETENKP) and 232–250 (GENRPRKSKLKDQSDKEEG). Residues 265 to 275 (SISPAKVTSGS) are compositionally biased toward polar residues. Phosphoserine is present on residues S273, S275, S294, and S416. 2 coiled-coil regions span residues 428 to 465 (SQSLLKQMESKREKEIKQRQNRELMDRLEQVQLTEELA) and 539 to 566 (KRNTILNQLVDQRRDLQMLQRTKREHLA).

It localises to the cytoplasm. The protein resides in the cytoskeleton. Its subcellular location is the microtubule organizing center. It is found in the centrosome. This is Coiled-coil domain-containing protein 81 (Ccdc81) from Rattus norvegicus (Rat).